The chain runs to 3289 residues: tRNA nuclease CdiA (3289 aa).

An N-terminal signal peptide occupies residues 1-32; sequence MHQPPVRFTYRLLSYLISTIIAGQPLLPAVGA. Residues 36–322 form a two-partner system transport domain (TPS) region; sequence PQNGAGMDKA…AGGNLSVSSR (287 aa). Positions 351–1398 are FHA-1; sequence EKLTAGRDVT…IVVRTGHLLN (1048 aa). A disordered region spans residues 595–615; it reads AVNASEKLTHSGKSSAPSLSL. The tract at residues 1399-1689 is receptor binding domain (RBD); it reads QREGFSATTT…LTGQTGISDD (291 aa). The interval 1690-1874 is YP domain; it reads WPLPSGNNGY…LSPEDITLHN (185 aa). A periplasmic FHA-1 repeat (pFR) region spans residues 1875–1935; it reads GSVISGNNVQ…DLSAIGDISN (61 aa). An FHA-2 region spans residues 1979 to 2653; sequence TDTGPVATIK…TSKYDSKQTS (675 aa). Residues 2097–2113 show a composition bias toward basic and acidic residues; sequence RESKNSRNGRSESHESH. Disordered stretches follow at residues 2097–2116, 2332–2356, and 2466–2513; these read RESK…HAAV, GSSK…TIGS, and TGDP…TGKN. Polar residues-rich tracts occupy residues 2344 to 2356 and 2472 to 2507; these read GTTQ…TIGS and TGVS…NLSV. The interval 2992 to 3034 is pretoxin (PT) domain; sequence SDLSEEQKQTISTLATVSAGLAGGLTGNSTASAAVGAQSGKNA. The VENN CT cleavage motif motif lies at 3035–3038; it reads VENN. A C-terminal effector domain (CT); has tRNase activity region spans residues 3035 to 3289; sequence VENNYLSVSE…VGHIQPVKVK (255 aa). The interval 3039–3197 is inner membrane translocation domain (IMTD), targets protein to PtsG; it reads YLSVSEKTEL…PLIGQAASNK (159 aa).

It in the N-terminal section; belongs to the CdiA toxin family. Forms a contact-dependent growth inhibition complex of CdiA-CT-NC101, CdiI-NC101 and EF-Tu; the complex is a dimer of heterotrimers. Stable CdiA-CT-NC101, EF-Tu complexes are not detected, nor are complexes with EF-Ts.

It localises to the secreted. Its subcellular location is the target cell. The protein resides in the target cell cytoplasm. Its function is as follows. Toxic component of a toxin-immunity protein module, which functions as a cellular contact-dependent growth inhibition (CDI) system. CDI modules allow bacteria to communicate with and inhibit the growth of closely related neighboring bacteria in a contact-dependent fashion (target cell counts decrease about 10,0000-fold for this system). CdiA toxicity is neutralized by its cognate immunity protein CdiI-NC101, but not by CdiI from other bacteria. The C-terminal domain (CT) cleaves tRNA endonucleolytically at the 5' side of guanine discriminator nucleotide sites (removes the last 4 nucleotides of the tRNA acceptor arm when the first nucleotide to be removed is G). Requires EF-Ts (tsf) for toxic function of the CT domain in vivo. In vitro the CT tRNase activity requires both EF-Tu (tufA) and EF-Ts. EF-Ts probably increases steady-state GTP-EF-Tu-aa-tRNA substrate levels. The CT domain is thought to remodel this same complex to displace the 3'-end of the aa-tRNA and allow it to enter into the toxin active site. The CT domain gains access to the cytoplasm of target cells by using integral inner membrane protein PTS system glucose-specific EIICB component (ptsG). In terms of biological role, the CdiA protein is thought to be exported from the cell through the central lumen of CdiB, the other half of its two-partner system (TPS). The TPS domain probably remains associated with CdiB while the FHA-1 domain forms an extended filament with the receptor-binding domain (RBD) at its extremity; in the secretion arrested state the C-terminus of the RBD and YP domains form a hairpin-like structure as the FHA-2, PT and CT domains are periplasmic. The YP domain is probably responsible for this arrest at the point where it re-enters the host cell periplasm. Upon binding to a target cell outer membrane receptor a signal is transmitted to activate secretion. The filament elongates slightly, the rest of CdiA is secreted and the FHA-2 domain becomes stably associated with the target cell's outer membrane where it facilitates entry of the toxic CT domain into the target cell periplasm. From there the toxic CT domain is cleaved and gains access to the target cell cytoplasm via an inner membrane protein (PtsG for this CDI). In Escherichia coli (strain NC101), this protein is tRNA nuclease CdiA.